The sequence spans 322 residues: Transcription factor IIIA (322 aa).

C2H2-type zinc fingers lie at residues 12–36, 42–64, 70–95, 102–126, 132–156, 159–184, 188–211, 218–243, and 249–273; these read FVCS…YCKH, FACD…NLSH, YQCL…ERVH, YVCD…KCEH, FECQ…EKVH, YPCA…KAAH, LQCD…LFVH, FKCT…LSFH, and FICP…AVVH. The segment at 272 to 322 is disordered; it reads VHDPQKKKLQKKTKRGRKKKLEPKTNVSDDSELPAQLHGLSLNTSTSQNNP. The segment covering 278-292 has biased composition (basic residues); sequence KKLQKKTKRGRKKKL. Residues 312-322 show a composition bias toward polar residues; the sequence is SLNTSTSQNNP.

The protein localises to the nucleus. In terms of biological role, involved in ribosomal large subunit biogenesis. Interacts with the internal control region (ICR) of approximately 50 bases within the 5S RNA genes, is required for correct transcription of these genes by RNA polymerase III. Also binds the transcribed 5S RNA's. This chain is Transcription factor IIIA (gtf3a), found in Ictalurus punctatus (Channel catfish).